Reading from the N-terminus, the 70-residue chain is Turripeptide Gsp9.3 (70 aa).

Residues 1–20 (MKVYCLLLVLLVGLVSQAHG) form the signal peptide. Residues 21–70 (QLDKKCQMVCTFDYRPVCGSDGRTYPNKCTLTSTACMSQRSITVFHDGEC) enclose the Kazal-like domain. Intrachain disulfides connect Cys26/Cys56, Cys30/Cys49, and Cys38/Cys70.

The protein belongs to the conopeptide P-like superfamily. Expressed by the venom duct.

The protein resides in the secreted. Its function is as follows. Acts as a neurotoxin by inhibiting an ion channel. May also act as a serine protease inhibitor, since it possess the kazal serine protease inhibitor signature. This is Turripeptide Gsp9.3 from Gemmula speciosa (Splendid gem-turris).